Consider the following 258-residue polypeptide: Pyridoxine 5'-phosphate synthase (258 aa).

Asn6 lines the 3-amino-2-oxopropyl phosphate pocket. A 1-deoxy-D-xylulose 5-phosphate-binding site is contributed by 8–9 (DH). Arg17 is a 3-amino-2-oxopropyl phosphate binding site. His42 functions as the Proton acceptor in the catalytic mechanism. 1-deoxy-D-xylulose 5-phosphate is bound by residues Arg44 and His49. Glu69 acts as the Proton acceptor in catalysis. Thr99 serves as a coordination point for 1-deoxy-D-xylulose 5-phosphate. His213 acts as the Proton donor in catalysis. 3-amino-2-oxopropyl phosphate-binding positions include Gly214 and 235 to 236 (GQ).

This sequence belongs to the PNP synthase family. In terms of assembly, homooctamer; tetramer of dimers.

It localises to the cytoplasm. It catalyses the reaction 3-amino-2-oxopropyl phosphate + 1-deoxy-D-xylulose 5-phosphate = pyridoxine 5'-phosphate + phosphate + 2 H2O + H(+). The protein operates within cofactor biosynthesis; pyridoxine 5'-phosphate biosynthesis; pyridoxine 5'-phosphate from D-erythrose 4-phosphate: step 5/5. Its function is as follows. Catalyzes the complicated ring closure reaction between the two acyclic compounds 1-deoxy-D-xylulose-5-phosphate (DXP) and 3-amino-2-oxopropyl phosphate (1-amino-acetone-3-phosphate or AAP) to form pyridoxine 5'-phosphate (PNP) and inorganic phosphate. This Sulfurovum sp. (strain NBC37-1) protein is Pyridoxine 5'-phosphate synthase.